Here is a 121-residue protein sequence, read N- to C-terminus: Large ribosomal subunit protein uL22 (121 aa).

The protein belongs to the universal ribosomal protein uL22 family. In terms of assembly, part of the 50S ribosomal subunit.

Functionally, this protein binds specifically to 23S rRNA; its binding is stimulated by other ribosomal proteins, e.g. L4, L17, and L20. It is important during the early stages of 50S assembly. It makes multiple contacts with different domains of the 23S rRNA in the assembled 50S subunit and ribosome. In terms of biological role, the globular domain of the protein is located near the polypeptide exit tunnel on the outside of the subunit, while an extended beta-hairpin is found that lines the wall of the exit tunnel in the center of the 70S ribosome. The sequence is that of Large ribosomal subunit protein uL22 from Arthrobacter sp. (strain FB24).